We begin with the raw amino-acid sequence, 147 residues long: Hemoglobin subunit beta (147 aa).

V2 is subject to N-acetylvaline. The Globin domain occupies 3 to 147; it reads HLTPDEKAAV…VANALAHKYH (145 aa). The residue at position 13 (T13) is a Phosphothreonine. At S45 the chain carries Phosphoserine. N6-acetyllysine is present on K60. Position 64 (H64) interacts with heme b. K83 is modified (N6-acetyllysine). A heme b-binding site is contributed by H93. C94 carries the post-translational modification S-nitrosocysteine. The residue at position 145 (K145) is an N6-acetyllysine.

This sequence belongs to the globin family. As to quaternary structure, heterotetramer of two alpha chains and two beta chains. As to expression, red blood cells.

Its function is as follows. Involved in oxygen transport from the lung to the various peripheral tissues. This is Hemoglobin subunit beta (HBB) from Colobus polykomos (Western black-and-white colobus monkey).